The sequence spans 255 residues: tRNA uridine(34) hydroxylase (255 aa).

The region spanning 125 to 219 (ATPDTILLDV…YLEQIPESES (95 aa)) is the Rhodanese domain. Cys179 serves as the catalytic Cysteine persulfide intermediate.

This sequence belongs to the TrhO family.

It catalyses the reaction uridine(34) in tRNA + AH2 + O2 = 5-hydroxyuridine(34) in tRNA + A + H2O. Its function is as follows. Catalyzes oxygen-dependent 5-hydroxyuridine (ho5U) modification at position 34 in tRNAs. This Nitrobacter winogradskyi (strain ATCC 25391 / DSM 10237 / CIP 104748 / NCIMB 11846 / Nb-255) protein is tRNA uridine(34) hydroxylase.